Here is a 129-residue protein sequence, read N- to C-terminus: uncharacterized protein (129 aa).

In terms of domain architecture, HIT spans 3–109; sequence IFCKIINGEI…IPRYEGDGEV (107 aa). The short motif at 94 to 98 is the Histidine triad motif element; it reads HVHFH.

This is an uncharacterized protein from Methanocaldococcus jannaschii (strain ATCC 43067 / DSM 2661 / JAL-1 / JCM 10045 / NBRC 100440) (Methanococcus jannaschii).